A 192-amino-acid chain; its full sequence is NADH dehydrogenase [ubiquinone] iron-sulfur protein 3 (192 aa).

The protein belongs to the complex I 30 kDa subunit family. Complex I is composed of about 45 different subunits. This is a component of the iron-sulfur (IP) fragment of the enzyme.

Its subcellular location is the mitochondrion inner membrane. It carries out the reaction a ubiquinone + NADH + 5 H(+)(in) = a ubiquinol + NAD(+) + 4 H(+)(out). Functionally, core subunit of the mitochondrial membrane respiratory chain NADH dehydrogenase (Complex I) that is believed to belong to the minimal assembly required for catalysis. Complex I functions in the transfer of electrons from NADH to the respiratory chain. The immediate electron acceptor for the enzyme is believed to be ubiquinone. This is NADH dehydrogenase [ubiquinone] iron-sulfur protein 3 (NAD9) from Beta vulgaris (Sugar beet).